The following is a 317-amino-acid chain: Tumor-associated calcium signal transducer 2 (317 aa).

Positions 1–24 (MARGLDLAPLLLLLLAMATRFCTA) are cleaved as a signal peptide. At 25–270 (QSNCTCPTNK…QFSMKRLTAG (246 aa)) the chain is on the extracellular side. Asparagine 27 is a glycosylation site (N-linked (GlcNAc...) asparagine). The Thyroglobulin type-1 domain maps to 64-139 (TSKCLLLKAR…TDKGDQSLRC (76 aa)). 3 cysteine pairs are disulfide-bonded: cysteine 67–cysteine 102, cysteine 113–cysteine 119, and cysteine 121–cysteine 139. Asparagine 114 carries N-linked (GlcNAc...) asparagine glycosylation. N-linked (GlcNAc...) asparagine glycans are attached at residues asparagine 162 and asparagine 202. A helical transmembrane segment spans residues 271-291 (VIAVIAVVSVAVVAGVVVLVV). Residues 292 to 317 (TKRRKSGKYKKVELKELGEMRSEPSL) lie on the Cytoplasmic side of the membrane.

Belongs to the EPCAM family. In terms of tissue distribution, expressed in kidney, lung, ovary and testis. High levels of expression in immortalized keratinocytes.

The protein localises to the membrane. In terms of biological role, may function as a growth factor receptor. The polypeptide is Tumor-associated calcium signal transducer 2 (Tacstd2) (Mus musculus (Mouse)).